The chain runs to 406 residues: Peptide chain release factor PrfB3, chloroplastic (406 aa).

The protein belongs to the prokaryotic/mitochondrial release factor family. In terms of assembly, interacts with PDE338.

It localises to the plastid. The protein localises to the chloroplast stroma. Its subcellular location is the chloroplast. Functionally, involved in the light- and stress-dependent regulation of stability of 3' processed petB transcripts, thus regulating cytochrome b6 accumulation, a rate-limiting step in photosynthetic electron transport. May be recruited to specifically protect petB transcripts against 3'-5' exonucleolytic attack by masking the 3' ends. Does not function as release factor. This chain is Peptide chain release factor PrfB3, chloroplastic, found in Arabidopsis thaliana (Mouse-ear cress).